Reading from the N-terminus, the 413-residue chain is Serine hydroxymethyltransferase (413 aa).

(6S)-5,6,7,8-tetrahydrofolate contacts are provided by residues Leu-117 and 121 to 123 (GHL). Lys-226 is modified (N6-(pyridoxal phosphate)lysine). (6S)-5,6,7,8-tetrahydrofolate is bound at residue 349 to 351 (SPF).

The protein belongs to the SHMT family. As to quaternary structure, homodimer. It depends on pyridoxal 5'-phosphate as a cofactor.

The protein localises to the cytoplasm. It catalyses the reaction (6R)-5,10-methylene-5,6,7,8-tetrahydrofolate + glycine + H2O = (6S)-5,6,7,8-tetrahydrofolate + L-serine. Its pathway is one-carbon metabolism; tetrahydrofolate interconversion. It functions in the pathway amino-acid biosynthesis; glycine biosynthesis; glycine from L-serine: step 1/1. Catalyzes the reversible interconversion of serine and glycine with tetrahydrofolate (THF) serving as the one-carbon carrier. This reaction serves as the major source of one-carbon groups required for the biosynthesis of purines, thymidylate, methionine, and other important biomolecules. Also exhibits THF-independent aldolase activity toward beta-hydroxyamino acids, producing glycine and aldehydes, via a retro-aldol mechanism. This Pelobacter propionicus (strain DSM 2379 / NBRC 103807 / OttBd1) protein is Serine hydroxymethyltransferase.